The primary structure comprises 227 residues: Cytochrome c oxidase subunit 2 (227 aa).

The Mitochondrial intermembrane portion of the chain corresponds to 1–14 (MAYPFQLGLQDATS). Residues 15-45 (PIMEELMNFHDHTLMIVFLISSLVLYIISLM) traverse the membrane as a helical segment. Over 46 to 59 (LTTKLTHTSTMDAQ) the chain is Mitochondrial matrix. The chain crosses the membrane as a helical span at residues 60–87 (EVETIWTILPAVILILIALPSLRILYMM). The Mitochondrial intermembrane portion of the chain corresponds to 88 to 227 (DEINNPVLTV…NFENWSASMI (140 aa)). Cu cation contacts are provided by histidine 161, cysteine 196, glutamate 198, cysteine 200, histidine 204, and methionine 207. A Mg(2+)-binding site is contributed by glutamate 198.

The protein belongs to the cytochrome c oxidase subunit 2 family. Component of the cytochrome c oxidase (complex IV, CIV), a multisubunit enzyme composed of 14 subunits. The complex is composed of a catalytic core of 3 subunits MT-CO1, MT-CO2 and MT-CO3, encoded in the mitochondrial DNA, and 11 supernumerary subunits COX4I, COX5A, COX5B, COX6A, COX6B, COX6C, COX7A, COX7B, COX7C, COX8 and NDUFA4, which are encoded in the nuclear genome. The complex exists as a monomer or a dimer and forms supercomplexes (SCs) in the inner mitochondrial membrane with NADH-ubiquinone oxidoreductase (complex I, CI) and ubiquinol-cytochrome c oxidoreductase (cytochrome b-c1 complex, complex III, CIII), resulting in different assemblies (supercomplex SCI(1)III(2)IV(1) and megacomplex MCI(2)III(2)IV(2)). Found in a complex with TMEM177, COA6, COX18, COX20, SCO1 and SCO2. Interacts with TMEM177 in a COX20-dependent manner. Interacts with COX20. Interacts with COX16. It depends on Cu cation as a cofactor.

It is found in the mitochondrion inner membrane. The catalysed reaction is 4 Fe(II)-[cytochrome c] + O2 + 8 H(+)(in) = 4 Fe(III)-[cytochrome c] + 2 H2O + 4 H(+)(out). Functionally, component of the cytochrome c oxidase, the last enzyme in the mitochondrial electron transport chain which drives oxidative phosphorylation. The respiratory chain contains 3 multisubunit complexes succinate dehydrogenase (complex II, CII), ubiquinol-cytochrome c oxidoreductase (cytochrome b-c1 complex, complex III, CIII) and cytochrome c oxidase (complex IV, CIV), that cooperate to transfer electrons derived from NADH and succinate to molecular oxygen, creating an electrochemical gradient over the inner membrane that drives transmembrane transport and the ATP synthase. Cytochrome c oxidase is the component of the respiratory chain that catalyzes the reduction of oxygen to water. Electrons originating from reduced cytochrome c in the intermembrane space (IMS) are transferred via the dinuclear copper A center (CU(A)) of subunit 2 and heme A of subunit 1 to the active site in subunit 1, a binuclear center (BNC) formed by heme A3 and copper B (CU(B)). The BNC reduces molecular oxygen to 2 water molecules using 4 electrons from cytochrome c in the IMS and 4 protons from the mitochondrial matrix. The sequence is that of Cytochrome c oxidase subunit 2 (MT-CO2) from Maxomys bartelsii (Bartels's Javan maxomys).